Consider the following 458-residue polypeptide: F-box/WD repeat-containing protein 9 (458 aa).

At methionine 1 the chain carries N-acetylmethionine. 2 disordered regions span residues 1 to 30 (MELP…DAQA) and 42 to 64 (KSGL…SASE). The span at 16–26 (DDSDPESETDP) shows a compositional bias: acidic residues. Phosphoserine is present on serine 18. Residue threonine 55 is modified to Phosphothreonine. Serine 59 bears the Phosphoserine mark. Residues 76–123 (EPGLLSLPPELLLEICSYLDARLVLHVLSRVCHALRDLVSDHVTWRLR) form the F-box domain. 7 WD repeats span residues 171–210 (GHVA…TESN), 220–261 (KRNS…QQFG), 264–301 (KASS…ALLK), 305–342 (LHSR…VLQR), 344–381 (QLDS…FQLI), 387–424 (GHSF…RTIC), and 427–458 (RHDN…RLQA).

Interacts with SKP1 and CUL1.

In terms of biological role, substrate-recognition component of the SCF (SKP1-CUL1-F-box protein)-type E3 ubiquitin ligase complex. This chain is F-box/WD repeat-containing protein 9 (FBXW9), found in Homo sapiens (Human).